The primary structure comprises 333 residues: Anthranilate phosphoribosyltransferase (333 aa).

5-phospho-alpha-D-ribose 1-diphosphate contacts are provided by residues glycine 81, 84–85 (GD), threonine 89, 91–94 (NIST), 109–117 (KHGNRSVSS), and alanine 121. Glycine 81 is an anthranilate binding site. Serine 93 provides a ligand contact to Mg(2+). Position 112 (asparagine 112) interacts with anthranilate. Position 167 (arginine 167) interacts with anthranilate. Residues aspartate 225 and glutamate 226 each contribute to the Mg(2+) site.

Belongs to the anthranilate phosphoribosyltransferase family. As to quaternary structure, homodimer. Mg(2+) serves as cofactor.

It catalyses the reaction N-(5-phospho-beta-D-ribosyl)anthranilate + diphosphate = 5-phospho-alpha-D-ribose 1-diphosphate + anthranilate. It participates in amino-acid biosynthesis; L-tryptophan biosynthesis; L-tryptophan from chorismate: step 2/5. Its function is as follows. Catalyzes the transfer of the phosphoribosyl group of 5-phosphorylribose-1-pyrophosphate (PRPP) to anthranilate to yield N-(5'-phosphoribosyl)-anthranilate (PRA). This Haemophilus influenzae (strain PittEE) protein is Anthranilate phosphoribosyltransferase.